Reading from the N-terminus, the 1782-residue chain is Signal-induced proliferation-associated 1-like protein 1 (1782 aa).

3 disordered regions span residues methionine 1–lysine 28, glycine 47–asparagine 125, and lysine 140–arginine 171. A compositionally biased stretch (basic and acidic residues) spans proline 84 to serine 94. The span at arginine 95–asparagine 125 shows a compositional bias: low complexity. Serine 162, serine 187, serine 193, serine 208, serine 255, and serine 288 each carry phosphoserine. The tract at residues glutamate 277–arginine 297 is disordered. In terms of domain architecture, Rap-GAP spans leucine 599–leucine 816. Residues glutamate 953 to cysteine 1031 form the PDZ domain. 2 disordered regions span residues glutamine 1069–proline 1128 and serine 1144–aspartate 1213. Residues serine 1078, serine 1087, serine 1116, serine 1127, serine 1149, serine 1170, and serine 1181 each carry the phosphoserine modification. Polar residues predominate over residues glutamine 1080–leucine 1093. Residues serine 1149–threonine 1159 are compositionally biased toward low complexity. Polar residues predominate over residues aspartate 1186–glutamine 1205. Phosphoserine occurs at positions 1234 and 1249. The tract at residues histidine 1247 to glycine 1285 is disordered. Residues serine 1261 to alanine 1276 are compositionally biased toward low complexity. Serine 1305 carries the phosphoserine; by PLK2 modification. The tract at residues isoleucine 1307–tryptophan 1342 is disordered. At threonine 1309 the chain carries Phosphothreonine; by PLK2. Low complexity predominate over residues serine 1315–serine 1328. At serine 1328 the chain carries Phosphoserine; by CDK5. Serine 1345 is subject to Phosphoserine. Basic and acidic residues predominate over residues threonine 1358 to glutamate 1368. A disordered region spans residues threonine 1358 to proline 1454. A phosphoserine mark is found at serine 1369, serine 1370, serine 1391, serine 1410, and serine 1412. Residues lysine 1378–serine 1410 are compositionally biased toward polar residues. Residues serine 1432–serine 1447 are compositionally biased toward low complexity. 2 positions are modified to phosphoserine: serine 1507 and serine 1528. Residue threonine 1530 is modified to Phosphothreonine. 5 positions are modified to phosphoserine: serine 1533, serine 1544, serine 1547, serine 1564, and serine 1567. Arginine 1580 bears the Asymmetric dimethylarginine mark. 9 positions are modified to phosphoserine: serine 1582, serine 1624, serine 1626, serine 1629, serine 1687, serine 1690, serine 1707, serine 1708, and serine 1712. Residues alanine 1625–methionine 1647 form a disordered region. Residues proline 1713–glutamate 1773 adopt a coiled-coil conformation.

As to quaternary structure, interacts with DLG4, PDLIM5, PDLIM7 and LZTS3. Interacts with the actin cytoskeleton. Interacts (via PDZ domain) with EPHA4 (via PDZ motif); controls neuronal morphology through regulation of the RAP1 (RAP1A or RAP1B) and RAP2 (RAP2A, RAP2B or RAP2C) GTPases. In terms of processing, ubiquitinated and degraded by the SCF(BTRC) following phosphorylation by PLK2. Post-translationally, phosphorylated at Ser-1328 by CDK5, creating a docking site for the POLO box domains of PLK2. Subsequently, PLK2 binds and phosphorylates SIPA1L1, leading to ubiquitination and degradation by the proteasome.

It is found in the cytoplasm. The protein localises to the cytoskeleton. It localises to the postsynaptic density. The protein resides in the synapse. Its subcellular location is the synaptosome. Stimulates the GTPase activity of RAP2A. Promotes reorganization of the actin cytoskeleton and recruits DLG4 to F-actin. Contributes to the regulation of dendritic spine morphogenesis. The protein is Signal-induced proliferation-associated 1-like protein 1 (Sipa1l1) of Mus musculus (Mouse).